The chain runs to 266 residues: Metallo-beta-lactamase VIM-1 (266 aa).

Residues methionine 1–alanine 20 form the signal peptide. Residues histidine 114, histidine 116, aspartate 118, histidine 179, cysteine 198, and histidine 240 each contribute to the Zn(2+) site.

This sequence belongs to the metallo-beta-lactamase superfamily. Class-B beta-lactamase family. Monomer. It depends on Zn(2+) as a cofactor.

It localises to the periplasm. It carries out the reaction a beta-lactam + H2O = a substituted beta-amino acid. With respect to regulation, weakly inhibited by beta-lactamase-blocking agent sulbactam. Class B beta-lactamase which confers resistance to the beta-lactam antibiotics, including penicillins, cephalosporins and carbapenems. Acts via hydrolysis of the beta-lactam ring. Has penicillin-, cephalosporin- and carbapenem-hydrolyzing activities. In Pseudomonas aeruginosa (strain ATCC 15692 / DSM 22644 / CIP 104116 / JCM 14847 / LMG 12228 / 1C / PRS 101 / PAO1), this protein is Metallo-beta-lactamase VIM-1.